The chain runs to 200 residues: Ribonuclease HII (200 aa).

The 190-residue stretch at 9–198 folds into the RNase H type-2 domain; sequence ALIAGVDEVG…VQRVLAQAKG (190 aa). A divalent metal cation-binding residues include aspartate 15, glutamate 16, and aspartate 107.

This sequence belongs to the RNase HII family. Mn(2+) serves as cofactor. Mg(2+) is required as a cofactor.

Its subcellular location is the cytoplasm. It carries out the reaction Endonucleolytic cleavage to 5'-phosphomonoester.. Its function is as follows. Endonuclease that specifically degrades the RNA of RNA-DNA hybrids. This is Ribonuclease HII from Pseudoalteromonas translucida (strain TAC 125).